The following is a 1061-amino-acid chain: Transcription factor GTE10 (1061 aa).

Disordered regions lie at residues 32–56 (ERMNSEASPPLKRRRFGLNGDNNGV) and 106–152 (NDHS…RLNV). Basic and acidic residues predominate over residues 109–118 (SCSDGPRRPP). The Bromo domain maps to 156–262 (YTVASVMKEC…KYFESGWKSI (107 aa)). The NET domain occupies 304–386 (KLRVEPAKLV…DYLREKKKSM (83 aa)). Disordered regions lie at residues 443-518 (ACRN…LNEL), 538-558 (VPDEETAPPERQISPDSPDKR), 606-645 (KERLQAEAKAAEEARRKAKAEAAEKARREREQEREAARQA), and 710-1033 (HLGL…GNGK). Residues 448-476 (ESSSSSSSSSESGSSSSDSDSCSSSGSET) show a composition bias toward low complexity. The span at 477–506 (DSIKASKPTSREEKKQPGVGIDKKEDDSNS) shows a compositional bias: basic and acidic residues. The stretch at 588–658 (PEKLRIEREE…MEKTVEINEG (71 aa)) forms a coiled coil. Basic and acidic residues-rich tracts occupy residues 733–755 (RKVEDNPFDRSEKQEHSPHRVEG), 770–792 (EAHDNGDQEDGKPINPNEIERQL), 828–852 (EEVHPLDRSEGRTLSPHRKEREDPR), 860–883 (VSEKAQDYENQRDEKINQSEREEQ), and 912–929 (LSLDKSEGQTLSPHREEG). Positions 852–893 (RASGNEESVSEKAQDYENQRDEKINQSEREEQLENVLEQESS) form a coiled coil. Positions 940–949 (LVSQKTQDNG) are enriched in polar residues. 2 stretches are compositionally biased toward basic and acidic residues: residues 952–962 (EDEKSINKIEG) and 990–1002 (GEQKSEVVEKGVE).

As to quaternary structure, interacts with TIP/NAC091. Widely expressed in all tissues.

It localises to the nucleus. Its function is as follows. Acts as a negative regulator in plant response to changes in environmental conditions through the control of ABA-regulated gene expression. The chain is Transcription factor GTE10 (GTE10) from Arabidopsis thaliana (Mouse-ear cress).